The sequence spans 360 residues: Ribosomal RNA large subunit methyltransferase F (360 aa).

Positions 1–36 (MSKLISKQGKRPALSQSGLAKPSTSKKSSASKNANT) are disordered. Over residues 23–36 (STSKKSSASKNANT) the composition is skewed to low complexity.

Belongs to the methyltransferase superfamily. METTL16/RlmF family.

The protein localises to the cytoplasm. It catalyses the reaction adenosine(1618) in 23S rRNA + S-adenosyl-L-methionine = N(6)-methyladenosine(1618) in 23S rRNA + S-adenosyl-L-homocysteine + H(+). Functionally, specifically methylates the adenine in position 1618 of 23S rRNA. The polypeptide is Ribosomal RNA large subunit methyltransferase F (Shewanella denitrificans (strain OS217 / ATCC BAA-1090 / DSM 15013)).